The following is a 112-amino-acid chain: Truncated ankyrin repeat protein B25 (112 aa).

The protein belongs to the orthopoxviruses B25 protein family.

This chain is Truncated ankyrin repeat protein B25, found in Bos taurus (Bovine).